The chain runs to 198 residues: Putative pseudouridine methyltransferase (198 aa).

S-adenosyl-L-methionine-binding residues include L132 and C186.

Belongs to the methyltransferase superfamily. TrmY family.

Its subcellular location is the cytoplasm. The polypeptide is Putative pseudouridine methyltransferase (Shewanella frigidimarina (strain NCIMB 400)).